The primary structure comprises 441 residues: Carbohydrate sulfotransferase 3 (441 aa).

Over 1-4 the chain is Cytoplasmic; it reads MKMR. A helical; Signal-anchor for type II membrane protein transmembrane segment spans residues 5-21; it reads SKYAIILFFVVALVIIE. The Lumenal segment spans residues 22–441; it reads KERNIISRVS…LLENRNFWIT (420 aa). 2 N-linked (GlcNAc...) asparagine glycosylation sites follow: asparagine 47 and asparagine 58. 106 to 112 is a binding site for 3'-phosphoadenylyl sulfate; the sequence is TRTGSSF. A glycan (N-linked (GlcNAc...) asparagine) is linked at asparagine 221. 266–274 contributes to the 3'-phosphoadenylyl sulfate binding site; the sequence is RDPRAVLAS. Residue asparagine 427 is glycosylated (N-linked (GlcNAc...) asparagine).

This sequence belongs to the sulfotransferase 1 family. Gal/GlcNAc/GalNAc subfamily. In terms of processing, N-glycosylated. In terms of tissue distribution, in electric organ, it is moderately expressed in spinal cord and electric lobe and undetectable in non-neural tissues. Expressed in a punctate distribution in the innervated portion of electrocytes. In the CNS, it is localized within the somas of motor neurons and neurons of the electromotor nucleus.

The protein localises to the golgi apparatus membrane. The enzyme catalyses chondroitin beta-D-glucuronate + n 3'-phosphoadenylyl sulfate = chondroitin 6'-sulfate + n adenosine 3',5'-bisphosphate + n H(+). The catalysed reaction is 3'-phosphoadenylyl sulfate + keratan = adenosine 3',5'-bisphosphate + keratan 6'-sulfate.. Functionally, sulfotransferase that utilizes 3'-phospho-5'-adenylyl sulfate (PAPS) as sulfonate donor to catalyze the transfer of sulfate to position 6 of the N-acetylgalactosamine (GalNAc) residue of chondroitin. Chondroitin sulfate constitutes the predominant proteoglycan present in cartilage and is distributed on the surfaces of many cells and extracellular matrices. Catalyzes with a lower efficiency the sulfation of Gal residues of keratan sulfate, another glycosaminoglycan. Can also catalyze the sulfation of the Gal residues in sialyl N-acetyllactosamine (sialyl LacNAc) oligosaccharides. The polypeptide is Carbohydrate sulfotransferase 3 (CHST3) (Tetronarce californica (Pacific electric ray)).